A 94-amino-acid chain; its full sequence is Co-chaperonin GroES (94 aa).

It belongs to the GroES chaperonin family. In terms of assembly, heptamer of 7 subunits arranged in a ring. Interacts with the chaperonin GroEL.

The protein resides in the cytoplasm. Together with the chaperonin GroEL, plays an essential role in assisting protein folding. The GroEL-GroES system forms a nano-cage that allows encapsulation of the non-native substrate proteins and provides a physical environment optimized to promote and accelerate protein folding. GroES binds to the apical surface of the GroEL ring, thereby capping the opening of the GroEL channel. The sequence is that of Co-chaperonin GroES from Listeria monocytogenes serotype 4b (strain CLIP80459).